The chain runs to 210 residues: Large ribosomal subunit protein uL3 (210 aa).

The interval 126–167 is disordered; sequence WGFQRGPSGHGSKNIREPGSTGNATFPGRVIKGKKMPGQKGN. Positions 156–167 are enriched in basic residues; that stretch reads IKGKKMPGQKGN.

The protein belongs to the universal ribosomal protein uL3 family. Part of the 50S ribosomal subunit. Forms a cluster with proteins L14 and L19.

One of the primary rRNA binding proteins, it binds directly near the 3'-end of the 23S rRNA, where it nucleates assembly of the 50S subunit. This chain is Large ribosomal subunit protein uL3, found in Syntrophobacter fumaroxidans (strain DSM 10017 / MPOB).